Reading from the N-terminus, the 610-residue chain is Scarecrow-like protein 11 (610 aa).

Disordered stretches follow at residues 32 to 54, 98 to 159, and 186 to 220; these read NNLF…PPTV, QQSP…RRNK, and QEEE…HKTN. Composition is skewed to low complexity over residues 41-52 and 99-119; these read SQNQSSPNDSPP and QSPE…GDQD. Polar residues-rich tracts occupy residues 123–137 and 209–220; these read PSTT…SSGE and GSSNKSKTHKTN. The GRAS domain maps to 215–598; sequence KTHKTNTVDL…RVIYAFSCWK (384 aa). Residues 222–283 are leucine repeat I (LRI); the sequence is VDLRSLLTQC…ARITGNISPP (62 aa). The VHIID stretch occupies residues 302 to 367; that stretch reads YKLFVHTCPI…GGPPMLRVTG (66 aa). A VHIID motif is present at residues 333 to 337; that stretch reads LHIVD. Residues 383–415 form a leucine repeat II (LRII) region; that stretch reads ETGRRLKRFCDQFNVPFEFNFIAKKWETITLDE. Residues 424 to 520 are PFYRE; that stretch reads TVVNCIHRLQ…RELLVRDAMS (97 aa). The SAW stretch occupies residues 523–598; it reads SCEGAERFAR…RVIYAFSCWK (76 aa).

This sequence belongs to the GRAS family. As to expression, highly expressed in roots and at lower levels in leaves and sepals. Expressed in siliques.

It is found in the nucleus. In terms of biological role, probable transcription factor involved in plant development. This chain is Scarecrow-like protein 11 (SCL11), found in Arabidopsis thaliana (Mouse-ear cress).